The primary structure comprises 71 residues: UPF0352 protein Swoo_2786 (71 aa).

Belongs to the UPF0352 family.

This chain is UPF0352 protein Swoo_2786, found in Shewanella woodyi (strain ATCC 51908 / MS32).